Here is a 173-residue protein sequence, read N- to C-terminus: T-cell receptor beta-2 chain C region (173 aa).

Positions 1–146 (EDLRNVTPPK…GVLSATILYE (146 aa)) are c region. Asparagine 67 and asparagine 116 each carry an N-linked (GlcNAc...) asparagine glycan. Residues 147–168 (ILLGKATLYAVLVSGLVLMAMV) traverse the membrane as a helical segment. At 169–173 (KKKNS) the chain is on the cytoplasmic side.

The protein resides in the membrane. This chain is T-cell receptor beta-2 chain C region, found in Mus musculus (Mouse).